A 119-amino-acid chain; its full sequence is Protein BEX4 (119 aa).

A disordered region spans residues methionine 1 to arginine 53. The span at alanine 8 to glutamate 20 shows a compositional bias: low complexity. The segment at asparagine 31–isoleucine 89 is interaction with SIRT2. Residues asparagine 31 to proline 119 form an interaction with alpha-tubulin region. Cysteine 116 contacts Zn(2+).

The protein belongs to the BEX family. As to quaternary structure, interacts with alpha-tubulin. Interacts with SIRT2. In terms of processing, ubiquitinated and degraded by the proteasome.

The protein localises to the cytoplasm. It is found in the cytoskeleton. It localises to the spindle pole. The protein resides in the nucleus. In terms of biological role, may play a role in microtubule deacetylation by negatively regulating the SIRT2 deacetylase activity toward alpha-tubulin and thereby participate in the control of cell cycle progression and genomic stability. In absence of reductive stress, acts as a pseudosubstrate for the CRL2(FEM1B) complex: associates with FEM1B via zinc, thereby preventing association between FEM1B and its substrates. In Pongo abelii (Sumatran orangutan), this protein is Protein BEX4.